The following is a 72-amino-acid chain: Large ribosomal subunit protein uL29 (72 aa).

Belongs to the universal ribosomal protein uL29 family. As to quaternary structure, part of the 50S ribosomal subunit.

This Pyrococcus furiosus (strain ATCC 43587 / DSM 3638 / JCM 8422 / Vc1) protein is Large ribosomal subunit protein uL29.